Here is a 213-residue protein sequence, read N- to C-terminus: Thymidylate kinase (213 aa).

10 to 17 (GLEGAGKT) provides a ligand contact to ATP.

It belongs to the thymidylate kinase family.

The enzyme catalyses dTMP + ATP = dTDP + ADP. Functionally, phosphorylation of dTMP to form dTDP in both de novo and salvage pathways of dTTP synthesis. This Klebsiella pneumoniae subsp. pneumoniae (strain ATCC 700721 / MGH 78578) protein is Thymidylate kinase.